An 879-amino-acid chain; its full sequence is DNA replication licensing factor mcm3 (879 aa).

The region spanning 306–513 (VFELLSTSLA…KDRALSEHVL (208 aa)) is the MCM domain. 356 to 363 (GDPSTAKS) provides a ligand contact to ATP. The Arginine finger signature appears at 488–491 (SRFD). The segment at 679 to 778 (RKKHKKQRLE…STLPATSREL (100 aa)) is disordered. Acidic residues predominate over residues 690–713 (GEEFDSEDDNSDDMDIEESEEEMD). The segment covering 732–752 (TSQSQESGSEIGSSIAGTAGS) has biased composition (low complexity). Residues 754-778 (NVGTSNTQLSWPSTHSTLPATSREL) are compositionally biased toward polar residues.

It belongs to the MCM family. In terms of assembly, component of the mcm2-7 complex. The complex forms a toroidal hexameric ring with the proposed subunit order mcm2-mcm6-mcm4-mcm7-mcm3-mcm5. The heterodimers of mcm4/mcm6 and mcm3/mcm5 interact with mcm2 and mcm7.

The protein resides in the nucleus. The enzyme catalyses ATP + H2O = ADP + phosphate + H(+). Its function is as follows. Acts as a component of the mcm2-7 complex (mcm complex) which is the putative replicative helicase essential for 'once per cell cycle' DNA replication initiation and elongation in eukaryotic cells. The active ATPase sites in the mcm2-7 ring are formed through the interaction surfaces of two neighboring subunits such that a critical structure of a conserved arginine finger motif is provided in trans relative to the ATP-binding site of the Walker A box of the adjacent subunit. The six ATPase active sites, however, are likely to contribute differentially to the complex helicase activity. The protein is DNA replication licensing factor mcm3 (mcm3) of Schizosaccharomyces pombe (strain 972 / ATCC 24843) (Fission yeast).